The primary structure comprises 489 residues: Metal cation symporter ZIP14 (489 aa).

The first 28 residues, methionine 1–alanine 28, serve as a signal peptide directing secretion. Residues serine 29–glycine 155 are Extracellular-facing. N-linked (GlcNAc...) asparagine glycosylation is found at asparagine 52, asparagine 75, asparagine 85, and asparagine 100. A helical transmembrane segment spans residues phenylalanine 156–methionine 176. The Cytoplasmic segment spans residues lysine 177–leucine 184. A helical membrane pass occupies residues leucine 185 to isoleucine 205. Over proline 206 to serine 221 the chain is Extracellular. The helical transmembrane segment at alanine 222–leucine 242 threads the bilayer. Over lysine 243 to glycine 349 the chain is Cytoplasmic. Positions histidine 248 to phenylalanine 255 match the HHHGHXHX-motif motif. Residues leucine 350–isoleucine 370 traverse the membrane as a helical segment. Residues leucine 371–glutamine 394 lie on the Extracellular side of the membrane. The XEXPHE-motif signature appears at glutamate 373 to glutamate 378. Residues alanine 395–leucine 415 traverse the membrane as a helical segment. Residues alanine 416–serine 421 are Cytoplasmic-facing. The chain crosses the membrane as a helical span at residues alanine 422–phenylalanine 442. The Extracellular portion of the chain corresponds to proline 443–serine 457. Residues phenylalanine 458–valine 478 form a helical membrane-spanning segment. Over leucine 479 to glycine 489 the chain is Cytoplasmic.

The protein belongs to the ZIP transporter (TC 2.A.5) family. In terms of assembly, homotrimer. Ubiquitinated. Ubiquitination occurs upon iron depletion. The ubiquitinated form undergoes proteasomal degradation. Post-translationally, N-glycosylated. N-glycosylation at Asn-100 is required for iron-regulated extraction of the transporter from membranes and subsequent proteasomal degradation. Widely expressed. Highly and transiently expressed during the early stage of adipocyte differentiation. Strongly expressed in liver, preadipocyte, duodenum and jejunum, moderately in brain, heart, skeletal muscle, spleen, pancreas, kidney and white adipose cells. Expression is almost undetectable in lung, testis and brown adipose cells. Expressed by chondrocytes and pituitary cells. In terms of tissue distribution, more strongly expressed in brain. As to expression, more strongly expressed in liver, kidney and duodenum.

The protein localises to the cell membrane. Its subcellular location is the apical cell membrane. It is found in the basolateral cell membrane. The protein resides in the early endosome membrane. It localises to the late endosome membrane. The protein localises to the lysosome membrane. It carries out the reaction Zn(2+)(out) + 2 hydrogencarbonate(out) = Zn(2+)(in) + 2 hydrogencarbonate(in). The enzyme catalyses Mn(2+)(out) + 2 hydrogencarbonate(out) = Mn(2+)(in) + 2 hydrogencarbonate(in). The catalysed reaction is Fe(2+)(out) + 2 hydrogencarbonate(out) = Fe(2+)(in) + 2 hydrogencarbonate(in). It catalyses the reaction Cd(2+)(out) + 2 hydrogencarbonate(out) = Cd(2+)(in) + 2 hydrogencarbonate(in). With respect to regulation, inhibited by cyanide and therefore dependent of an energy source. Inhibited by DIDS/4,4'-diisothiocyanatostilbene-2,2'-disulfonic acid, an inhibitor hydrogencarbonate-dependent transporters. Electroneutral transporter of the plasma membrane mediating the cellular uptake of the divalent metal cations zinc, manganese and iron that are important for tissue homeostasis, metabolism, development and immunity. Functions as an energy-dependent symporter, transporting through the membranes an electroneutral complex composed of a divalent metal cation and two bicarbonate anions. Beside these endogenous cellular substrates, can also import cadmium a non-essential metal which is cytotoxic and carcinogenic. Controls the cellular uptake by the intestinal epithelium of systemic zinc, which is in turn required to maintain tight junctions and the intestinal permeability. Modifies the activity of zinc-dependent phosphodiesterases, thereby indirectly regulating G protein-coupled receptor signaling pathways important for gluconeogenesis and chondrocyte differentiation. Regulates insulin receptor signaling, glucose uptake, glycogen synthesis and gluconeogenesis in hepatocytes through the zinc-dependent intracellular catabolism of insulin. Through zinc cellular uptake also plays a role in the adaptation of cells to endoplasmic reticulum stress. Major manganese transporter of the basolateral membrane of intestinal epithelial cells, it plays a central role in manganese systemic homeostasis through intestinal manganese uptake. Also involved in manganese extracellular uptake by cells of the blood-brain barrier. May also play a role in manganese and zinc homeostasis participating in their elimination from the blood through the hepatobiliary excretion. Also functions in the extracellular uptake of free iron. May also function intracellularly and mediate the transport from endosomes to cytosol of iron endocytosed by transferrin. Plays a role in innate immunity by regulating the expression of cytokines by activated macrophages. The protein is Metal cation symporter ZIP14 of Mus musculus (Mouse).